The sequence spans 1370 residues: Major capsid protein (1370 aa).

It belongs to the herpesviridae major capsid protein family. Homomultimer. Makes the hexons and eleven out of twelve pentons. Interacts with triplex proteins 1/TRX1 and 2/TRX2; adjacent capsomers are linked together in groups of three by triplexes, heterotrimeric complexes composed of one molecule of TRX1 and two molecules of TRX2. Interacts with scaffold protein; this interaction allows efficient MCP transport to the host nucleus. Interacts with capsid vertex component 2/CVC2. Interacts with the small capsomere-interacting protein/SCP.

Its subcellular location is the virion. It is found in the host nucleus. Its function is as follows. Self-assembles to form an icosahedral capsid with a T=16 symmetry, about 200 nm in diameter, and consisting of 150 hexons and 12 pentons (total of 162 capsomers). Hexons form the edges and faces of the capsid and are each composed of six MCP molecules. In contrast, one penton is found at each of the 12 vertices. Eleven of the pentons are MCP pentamers, while the last vertex is occupied by the portal complex. The capsid is surrounded by a layer of proteinaceous material designated the tegument which, in turn, is enclosed in an envelope of host cell-derived lipids containing virus-encoded glycoproteins. The protein is Major capsid protein of Connochaetes taurinus (Blue wildebeest).